Here is a 394-residue protein sequence, read N- to C-terminus: ATP-dependent RNA helicase fal1 (394 aa).

Residues 21–49 carry the Q motif motif; that stretch reads SSFEEMNLKEDLLRGIYAYGYETPSAVQS. Residues 52-222 enclose the Helicase ATP-binding domain; that stretch reads IIQICKGRDV…NKFTTNPVRI (171 aa). 65 to 72 contributes to the ATP binding site; sequence AQSGTGKT. Ser67 is modified (phosphoserine). A DEAD box motif is present at residues 170-173; it reads DEAD. In terms of domain architecture, Helicase C-terminal spans 233 to 394; sequence GLKQYFIAVE…EMPMNIGDMV (162 aa).

It belongs to the DEAD box helicase family. DDX48/FAL1 subfamily.

It localises to the nucleus. The protein resides in the nucleolus. It catalyses the reaction ATP + H2O = ADP + phosphate + H(+). Its function is as follows. ATP-dependent RNA helicase involved in 40S ribosomal subunit biogenesis. Required for the processing and cleavage of 35S pre-rRNA at sites A0, A1, and A2, leading to mature 18S rRNA. The protein is ATP-dependent RNA helicase fal1 (tif412) of Schizosaccharomyces pombe (strain 972 / ATCC 24843) (Fission yeast).